The following is an 88-amino-acid chain: ATP synthase subunit c 2 (88 aa).

Helical transmembrane passes span 4–24 (FSWV…GTGI) and 53–73 (IGLA…MIIL).

It belongs to the ATPase C chain family. As to quaternary structure, F-type ATPases have 2 components, F(1) - the catalytic core - and F(0) - the membrane proton channel. F(1) has five subunits: alpha(3), beta(3), gamma(1), delta(1), epsilon(1). F(0) has three main subunits: a(1), b(2) and c(10-14). The alpha and beta chains form an alternating ring which encloses part of the gamma chain. F(1) is attached to F(0) by a central stalk formed by the gamma and epsilon chains, while a peripheral stalk is formed by the delta and b chains.

It is found in the cell inner membrane. In terms of biological role, f(1)F(0) ATP synthase produces ATP from ADP in the presence of a proton or sodium gradient. F-type ATPases consist of two structural domains, F(1) containing the extramembraneous catalytic core and F(0) containing the membrane proton channel, linked together by a central stalk and a peripheral stalk. During catalysis, ATP synthesis in the catalytic domain of F(1) is coupled via a rotary mechanism of the central stalk subunits to proton translocation. Its function is as follows. Key component of the F(0) channel; it plays a direct role in translocation across the membrane. A homomeric c-ring of between 10-14 subunits forms the central stalk rotor element with the F(1) delta and epsilon subunits. The protein is ATP synthase subunit c 2 of Syntrophotalea carbinolica (strain DSM 2380 / NBRC 103641 / GraBd1) (Pelobacter carbinolicus).